We begin with the raw amino-acid sequence, 376 residues long: Cytochrome-c peroxidase IdrP1 (376 aa).

Residues 1 to 24 (MGHIRSIRLALAVAAVCTAASAAA) form the signal peptide. Cytochrome c domains follow at residues 49 to 157 (DKVA…AAFK) and 203 to 354 (AEAQ…EALS). Heme c-binding residues include C71, C74, H75, C218, C221, and H222.

As to quaternary structure, the iodate reductase (Idr) complex is composed of a molybdopterin-dependent iodate reductase (IdrA and IdrB subunits) and two associated peroxidases (IdrP1 and IdrP2). It depends on heme c as a cofactor.

The protein resides in the periplasm. The catalysed reaction is 2 Fe(II)-[cytochrome c] + H2O2 + 2 H(+) = 2 Fe(III)-[cytochrome c] + 2 H2O. Its function is as follows. Involved in iodate respiration. May play a critical role in detoxification of inadvertent H(2)O(2) generated by the iodate reductase IdrA/IdrB. The chain is Cytochrome-c peroxidase IdrP1 from Denitromonas iodatirespirans.